The sequence spans 794 residues: DNA ligase (794 aa).

NAD(+)-binding positions include 35 to 39 (DAEYD), 84 to 85 (SL), and glutamate 126. The active-site N6-AMP-lysine intermediate is the lysine 128. Arginine 149, glutamate 186, lysine 302, and lysine 326 together coordinate NAD(+). Zn(2+) is bound by residues cysteine 420, cysteine 423, cysteine 450, and cysteine 456. Residues 711 to 794 (VEGLPLAGQT…KLFDEHGVAR (84 aa)) enclose the BRCT domain.

Belongs to the NAD-dependent DNA ligase family. LigA subfamily. It depends on Mg(2+) as a cofactor. Requires Mn(2+) as cofactor.

The catalysed reaction is NAD(+) + (deoxyribonucleotide)n-3'-hydroxyl + 5'-phospho-(deoxyribonucleotide)m = (deoxyribonucleotide)n+m + AMP + beta-nicotinamide D-nucleotide.. Functionally, DNA ligase that catalyzes the formation of phosphodiester linkages between 5'-phosphoryl and 3'-hydroxyl groups in double-stranded DNA using NAD as a coenzyme and as the energy source for the reaction. It is essential for DNA replication and repair of damaged DNA. This chain is DNA ligase, found in Pseudomonas aeruginosa (strain UCBPP-PA14).